Here is a 290-residue protein sequence, read N- to C-terminus: Release factor glutamine methyltransferase (290 aa).

S-adenosyl-L-methionine contacts are provided by Asp-140 and Asn-181. Residue 181-184 (NPPY) participates in substrate binding.

It belongs to the protein N5-glutamine methyltransferase family. PrmC subfamily.

The enzyme catalyses L-glutaminyl-[peptide chain release factor] + S-adenosyl-L-methionine = N(5)-methyl-L-glutaminyl-[peptide chain release factor] + S-adenosyl-L-homocysteine + H(+). In terms of biological role, methylates the class 1 translation termination release factors RF1/PrfA and RF2/PrfB on the glutamine residue of the universally conserved GGQ motif. This chain is Release factor glutamine methyltransferase, found in Chlamydia trachomatis serovar D (strain ATCC VR-885 / DSM 19411 / UW-3/Cx).